A 3183-amino-acid polypeptide reads, in one-letter code: WD repeat- and FYVE domain-containing protein 4 (3183 aa).

Residues 1–15 (MEAEDLSKTEDRPED) are compositionally biased toward basic and acidic residues. Disordered regions lie at residues 1–37 (MEAEDLSKTEDRPEDPGFQNEGQSPAVKPSFSLEGQS), 790–811 (AGQEPSVDAQKAEAGGRQGKFK), 938–977 (KSLHLPPGHEDNPGCSGSCAATAEKPTDSSPRPGGSQALR), and 1828–1852 (KETTSESSRNTSSPGASAEASHAAE). Over residues 1832-1852 (SESSRNTSSPGASAEASHAAE) the composition is skewed to low complexity. The BEACH-type PH domain occupies 2383–2508 (LDGEKVSQKV…DRSKALKSFS (126 aa)). The region spanning 2525-2819 (NLRKHPGFDR…QIFTKPHPSR (295 aa)) is the BEACH domain. Residues 2812–2836 (FTKPHPSRNTTGKNPGPGKDASTPV) form a disordered region. WD repeat units follow at residues 2930–2969 (LAAWGPCLCAVCPSPTMIVTSGASAVVCIWELSLVKGRPR), 2979–3018 (GHTQAVTCLTASVTFSLLVSGSQDRTCILWDLDHLSRVAC), 3021–3060 (VHREGISAIAISDVSGTIVSCAGAHLSLWNVNGQPLASIT), 3070–3108 (TCCCIVEGPAWDASHVIITGSKDGMVRIWKTEDVKMPVP), and 3150–3183 (KASPAVTALAITRNQSKLLVGDEKGRIFCWSADG).

In terms of assembly, interacts with HSP90AB1. As to expression, highly expressed in immune tissues, especially B lymphocytes.

It localises to the early endosome. The protein resides in the endoplasmic reticulum. Its function is as follows. Plays a critical role in the regulation of cDC1-mediated cross-presentation of viral and tumor antigens in dendritic cells. Mechanistically, acts near the plasma membrane and interacts with endosomal membranes to promote endosomal-to-cytosol antigen trafficking. Also plays a role in B-cell survival through regulation of autophagy. The chain is WD repeat- and FYVE domain-containing protein 4 from Mus musculus (Mouse).